The sequence spans 394 residues: MGCLGNSKTEDQRNEEKAQREANKKIEKQLQKDKQVYRATHRLLLLGAGESGKSTIVKQMRILHVNGFNGEGGEEDPQAARSNSDGEKATKVQDIKNNLKEAIETIVAAMSNLVPPVELANPENQFRVDYILSVMNVPDFDFPPEFYEHAKALWEDEGVRACYERSNEYQLIDCAQYFLDKIDVIKQDDYVPSDQDLLRCRVLTSGIFETKFQVDKVNFHMFDVGGQRDERRKWIQCFNDVTAIIFVVASSSYNMVIREDNQTNRLQEALNLFKSIWNNRWLRTISVILFLNKQDLLAEKVLAGKSKIEDYFPEFARYTTPEDATPEPGEDPRVTRAKYFIRDEFLRISTASGDGRHYCYPHFTCAVDTENIRRVFNDCRDIIQRMHLRQYELL.

The disordered stretch occupies residues 1–23 (MGCLGNSKTEDQRNEEKAQREAN). Residue glycine 2 is the site of N-palmitoyl glycine attachment. Residue cysteine 3 is the site of S-palmitoyl cysteine attachment. Residues 8-23 (KTEDQRNEEKAQREAN) show a composition bias toward basic and acidic residues. The region spanning 39–394 (ATHRLLLLGA…RMHLRQYELL (356 aa)) is the G-alpha domain. The segment at 42–55 (RLLLLGAGESGKST) is G1 motif. 47–55 (GAGESGKST) is a binding site for GTP. Serine 54 is a binding site for Mg(2+). The interval 68–91 (FNGEGGEEDPQAARSNSDGEKATK) is disordered. A G2 motif region spans residues 196–204 (DLLRCRVLT). GTP-binding positions include 197 to 204 (LLRCRVLT), 223 to 227 (DVGGQ), and 292 to 295 (NKQD). Threonine 204 lines the Mg(2+) pocket. Residues 219–228 (FHMFDVGGQR) are G3 motif. Positions 288 to 295 (ILFLNKQD) are G4 motif. A Glycyl lysine isopeptide (Lys-Gly) (interchain with G-Cter in ubiquitin) cross-link involves residue lysine 300. Serine 352 carries the post-translational modification Phosphoserine. The G5 motif stretch occupies residues 364-369 (TCAVDT). Alanine 366 contacts GTP.

The protein belongs to the G-alpha family. G(s) subfamily. In terms of assembly, heterotrimeric G proteins are composed of 3 units; alpha, beta and gamma. The alpha chain contains the guanine nucleotide binding site. Component of the TAS2R14-GNAS2 complex, consisting of TAS2R14, GNAS2, GNB1 and GNG2; within the complex interacts with TAS2R14; this complex plays a role in the perception of bitterness. Interacts with CRY1; the interaction may block GPCR-mediated regulation of cAMP concentrations. Interacts with ADCY6 and stimulates its adenylyl cyclase activity. Interacts with ADCY2 and ADCY5. Stimulates the ADCY5 adenylyl cyclase activity. Interacts (GDP-bound form) with RIC8B; promoting GNAS folding and association with the plasma membrane. Interaction with SASH1. Interacts with GASL2L2.

Its subcellular location is the cell membrane. It carries out the reaction GTP + H2O = GDP + phosphate + H(+). Functionally, guanine nucleotide-binding proteins (G proteins) function as transducers in numerous signaling pathways controlled by G protein-coupled receptors (GPCRs). The alpha chain contains the guanine nucleotide binding site and alternates between an active, GTP-bound state and an inactive, GDP-bound state. Signaling by an activated GPCR promotes GDP release and GTP binding. The alpha subunit has a low GTPase activity that converts bound GTP to GDP, thereby terminating the signal. Both GDP release and GTP hydrolysis are modulated by numerous regulatory proteins. Signaling involves the activation of adenylyl cyclases, resulting in increased levels of the signaling molecule cAMP. Functions downstream of beta-adrenergic receptors. Stimulates the Ras signaling pathway via RAPGEF2. The polypeptide is Guanine nucleotide-binding protein G(s) subunit alpha isoforms short (GNAS) (Bos taurus (Bovine)).